A 474-amino-acid polypeptide reads, in one-letter code: tRNA-2-methylthio-N(6)-dimethylallyladenosine synthase (474 aa).

The MTTase N-terminal domain maps to 3–120; the sequence is KKLHIKTWGC…LPEMINHVQG (118 aa). The [4Fe-4S] cluster site is built by C12, C49, C83, C157, C161, and C164. Positions 143 to 375 constitute a Radical SAM core domain; that stretch reads RADGPTAFVS…QDRITKQAMR (233 aa). A TRAM domain is found at 378-441; sequence RLMLGTVQRI…TNSLRGIVVR (64 aa).

Belongs to the methylthiotransferase family. MiaB subfamily. Monomer. The cofactor is [4Fe-4S] cluster.

Its subcellular location is the cytoplasm. The catalysed reaction is N(6)-dimethylallyladenosine(37) in tRNA + (sulfur carrier)-SH + AH2 + 2 S-adenosyl-L-methionine = 2-methylsulfanyl-N(6)-dimethylallyladenosine(37) in tRNA + (sulfur carrier)-H + 5'-deoxyadenosine + L-methionine + A + S-adenosyl-L-homocysteine + 2 H(+). Functionally, catalyzes the methylthiolation of N6-(dimethylallyl)adenosine (i(6)A), leading to the formation of 2-methylthio-N6-(dimethylallyl)adenosine (ms(2)i(6)A) at position 37 in tRNAs that read codons beginning with uridine. In Pectobacterium atrosepticum (strain SCRI 1043 / ATCC BAA-672) (Erwinia carotovora subsp. atroseptica), this protein is tRNA-2-methylthio-N(6)-dimethylallyladenosine synthase.